The primary structure comprises 673 residues: B3 domain-containing protein Os01g0905400 (673 aa).

Over residues 1 to 34 (MVELIKVPKIEQEEGNADSHGKEKADVVHEEKTE) the composition is skewed to basic and acidic residues. Residues 1-44 (MVELIKVPKIEQEEGNADSHGKEKADVVHEEKTEKVKRRRKRVS) form a disordered region. The TF-B3 1 DNA-binding region spans 79–172 (LPSFFKIMVG…VFTVQIFAIS (94 aa)). Positions 315-337 (PSFSYPESSNVMTADKESERSHQ) are disordered. Positions 328–337 (ADKESERSHQ) are enriched in basic and acidic residues. A DNA-binding region (TF-B3 2) is located at residues 576 to 671 (SKKFCITIPP…ELSFQVLVPN (96 aa)).

The protein localises to the nucleus. This Oryza sativa subsp. japonica (Rice) protein is B3 domain-containing protein Os01g0905400.